A 299-amino-acid polypeptide reads, in one-letter code: Cytosolic sulfotransferase 1 (299 aa).

A 3'-phosphoadenylyl sulfate-binding site is contributed by 51–56; sequence KAGTTW. His113 serves as the catalytic Proton acceptor. 3'-phosphoadenylyl sulfate is bound by residues Arg135, Ser143, Tyr199, 233-238, and 261-263; these read VQFDAM and RKG.

Belongs to the sulfotransferase 1 family. Expressed in liver.

It localises to the cytoplasm. Its activity is regulated as follows. Inhibited by Co(2+), Zn(2+), Cd(2+) and Pb(2+) ions. Inactivated by Hg(2+) and Cu(2+) ions. Functionally, sulfotransferase that utilizes 3'-phospho-5'-adenylyl sulfate (PAPS) as sulfonate donor to catalyze the sulfate conjugation of a variety of xenobiotic and endogenous compounds, including 2-naphthol, hydroxychlorobiphenyls, dopamine and T3 (triiodo-L-thyronine). This is Cytosolic sulfotransferase 1 from Danio rerio (Zebrafish).